A 268-amino-acid chain; its full sequence is Centromere protein Q (268 aa).

Residues methionine 1–threonine 80 are disordered. A phosphoserine mark is found at serine 31 and serine 50. Residues threonine 58 to threonine 72 show a composition bias toward basic residues. Positions glutamate 170–serine 206 form a coiled coil. Serine 249 is modified (phosphoserine).

It belongs to the CENP-Q/OKP1 family. As to quaternary structure, component of the CENPA-CAD complex, composed of CENPI, CENPK, CENPL, CENPO, CENPP, CENPQ, CENPR and CENPS. The CENPA-CAD complex interacts with the CENPA-NAC complex, at least composed of CENPA, CENPC, CENPH, CENPM, CENPN, CENPT and CENPU. In terms of processing, phosphorylation at Ser-50 is essential for CENPE recruitment to kinetochores and orderly chromosome congression.

It is found in the nucleus. Its subcellular location is the chromosome. It localises to the centromere. In terms of biological role, component of the CENPA-CAD (nucleosome distal) complex, a complex recruited to centromeres which is involved in assembly of kinetochore proteins, mitotic progression and chromosome segregation. May be involved in incorporation of newly synthesized CENPA into centromeres via its interaction with the CENPA-NAC complex. Plays an important role in chromosome congression and in the recruitment of CENP-O complex (which comprises CENPO, CENPP, CENPQ and CENPU), CENPE and PLK1 to the kinetochores. The polypeptide is Centromere protein Q (CENPQ) (Homo sapiens (Human)).